The following is a 1390-amino-acid chain: DNA-directed RNA polymerase subunit beta (1390 aa).

The protein belongs to the RNA polymerase beta chain family. As to quaternary structure, the RNAP catalytic core consists of 2 alpha, 1 beta, 1 beta' and 1 omega subunit. When a sigma factor is associated with the core the holoenzyme is formed, which can initiate transcription.

The catalysed reaction is RNA(n) + a ribonucleoside 5'-triphosphate = RNA(n+1) + diphosphate. Functionally, DNA-dependent RNA polymerase catalyzes the transcription of DNA into RNA using the four ribonucleoside triphosphates as substrates. This is DNA-directed RNA polymerase subunit beta from Gluconobacter oxydans (strain 621H) (Gluconobacter suboxydans).